We begin with the raw amino-acid sequence, 98 residues long: Large ribosomal subunit protein bL27 (98 aa).

Positions 1–11 (MASKASGGSTR) are enriched in polar residues. Positions 1 to 20 (MASKASGGSTRNGRDSISKR) are disordered.

This sequence belongs to the bacterial ribosomal protein bL27 family.

The sequence is that of Large ribosomal subunit protein bL27 from Aquifex aeolicus (strain VF5).